The primary structure comprises 303 residues: Quinolinate synthase (303 aa).

Positions 24 and 41 each coordinate iminosuccinate. [4Fe-4S] cluster is bound at residue Cys86. Residues 112–114 (YIN) and Ser129 each bind iminosuccinate. Position 172 (Cys172) interacts with [4Fe-4S] cluster. Iminosuccinate-binding positions include 198–200 (HPE) and Thr215. Cys260 contacts [4Fe-4S] cluster.

This sequence belongs to the quinolinate synthase family. Type 2 subfamily. The cofactor is [4Fe-4S] cluster.

It localises to the cytoplasm. The catalysed reaction is iminosuccinate + dihydroxyacetone phosphate = quinolinate + phosphate + 2 H2O + H(+). The protein operates within cofactor biosynthesis; NAD(+) biosynthesis; quinolinate from iminoaspartate: step 1/1. Functionally, catalyzes the condensation of iminoaspartate with dihydroxyacetone phosphate to form quinolinate. The polypeptide is Quinolinate synthase (Caldicellulosiruptor bescii (strain ATCC BAA-1888 / DSM 6725 / KCTC 15123 / Z-1320) (Anaerocellum thermophilum)).